Consider the following 131-residue polypeptide: MCMTDPIADMLTRIRNAQSAEQKEIKMPSSKLKKAILKILKEEGYIENFQEDPNHKKPSISVILKYFNGEPVITSISRVSKPGLRSYKSKNDLPRVMNGLGVAIVSTSKGVMTERTARMAGVGGELLCVVT.

The protein belongs to the universal ribosomal protein uS8 family. As to quaternary structure, part of the 30S ribosomal subunit. Contacts proteins S5 and S12.

In terms of biological role, one of the primary rRNA binding proteins, it binds directly to 16S rRNA central domain where it helps coordinate assembly of the platform of the 30S subunit. This chain is Small ribosomal subunit protein uS8, found in Nitrosomonas europaea (strain ATCC 19718 / CIP 103999 / KCTC 2705 / NBRC 14298).